A 258-amino-acid chain; its full sequence is Membrane-associated protein Vipp1 (258 aa).

The segment at 217–258 (MLPPATPVTQAQLPPQQETTPAKSNEVVDAELDSLRKQLDQL) is disordered. Polar residues predominate over residues 223–239 (PVTQAQLPPQQETTPAK). Positions 249–258 (DSLRKQLDQL) are enriched in basic and acidic residues.

Belongs to the PspA/Vipp/IM30 family. Polymerizes to form rings, filaments and ribbons. Rings are formed by stacked rungs that tilt to give a dome-shaped curvature. Rings form with symmetries ranging from C11 (55 subunits) to C17 (119 subunits).

It is found in the cell inner membrane. In terms of biological role, a membrane remodeling protein capable of forming rings and/or filaments on membranes, which then curve and tubulate the bilayer. Rings will form on liposomes, altering their positive curvature so the lipid bilayer is remodeled into a negative curve as the membrane enters the ring. Ring stacks of varying lengths can be seen joining isolated liposomes. A lipid monolayer can be drawn into the center of the rings. Required for thylakoid formation. This chain is Membrane-associated protein Vipp1, found in Nostoc punctiforme (strain ATCC 29133 / PCC 73102).